Here is a 271-residue protein sequence, read N- to C-terminus: DNA repair protein RecO (271 aa).

The protein belongs to the RecO family.

Its function is as follows. Involved in DNA repair and RecF pathway recombination. The sequence is that of DNA repair protein RecO from Rhodococcus erythropolis (strain PR4 / NBRC 100887).